A 165-amino-acid chain; its full sequence is RxLR effector protein PITG_09218 (165 aa).

The signal sequence occupies residues 1–24 (MRFSAFLTLLLVAFVASCSTFASA). The RxLR-dEER signature appears at 31-57 (RRLRADAAPVPVNKDNVAKLAGGFLEK). Residues 129-149 (VTLGATVAGFAIYGAYKALFD) traverse the membrane as a helical segment.

The protein belongs to the RxLR effector family.

It is found in the secreted. The protein localises to the host mitochondrion membrane. The protein resides in the host endoplasmic reticulum membrane. In terms of biological role, effector that enhances P.infestans colonization of Nicotiana benthamiana leaves. This chain is RxLR effector protein PITG_09218, found in Phytophthora infestans (strain T30-4) (Potato late blight agent).